The following is a 159-amino-acid chain: Ribosomal RNA large subunit methyltransferase H (159 aa).

S-adenosyl-L-methionine is bound by residues leucine 76 and glycine 108.

It belongs to the RNA methyltransferase RlmH family. In terms of assembly, homodimer.

The protein localises to the cytoplasm. It carries out the reaction pseudouridine(1915) in 23S rRNA + S-adenosyl-L-methionine = N(3)-methylpseudouridine(1915) in 23S rRNA + S-adenosyl-L-homocysteine + H(+). Specifically methylates the pseudouridine at position 1915 (m3Psi1915) in 23S rRNA. The chain is Ribosomal RNA large subunit methyltransferase H from Levilactobacillus brevis (strain ATCC 367 / BCRC 12310 / CIP 105137 / JCM 1170 / LMG 11437 / NCIMB 947 / NCTC 947) (Lactobacillus brevis).